A 223-amino-acid polypeptide reads, in one-letter code: Cytidylate kinase (223 aa).

G12–T20 contributes to the ATP binding site.

This sequence belongs to the cytidylate kinase family. Type 1 subfamily.

It is found in the cytoplasm. It catalyses the reaction CMP + ATP = CDP + ADP. The catalysed reaction is dCMP + ATP = dCDP + ADP. The sequence is that of Cytidylate kinase from Xylella fastidiosa (strain M23).